The chain runs to 285 residues: Probable endonuclease 4 (285 aa).

9 residues coordinate Zn(2+): histidine 69, histidine 109, glutamate 145, aspartate 179, histidine 182, histidine 216, aspartate 229, histidine 231, and glutamate 261.

It belongs to the AP endonuclease 2 family. It depends on Zn(2+) as a cofactor.

The enzyme catalyses Endonucleolytic cleavage to 5'-phosphooligonucleotide end-products.. Endonuclease IV plays a role in DNA repair. It cleaves phosphodiester bonds at apurinic or apyrimidinic (AP) sites, generating a 3'-hydroxyl group and a 5'-terminal sugar phosphate. This Salmonella arizonae (strain ATCC BAA-731 / CDC346-86 / RSK2980) protein is Probable endonuclease 4.